Here is an 828-residue protein sequence, read N- to C-terminus: Protein kintoun (828 aa).

5 disordered regions span residues 1-31 (MSGS…DEPI), 223-250 (KNPT…EGEP), 383-424 (DSGV…PTSN), 556-668 (APVQ…HRGI), and 741-828 (KKNQ…EDLI). Positions 9–22 (RNKHSKGNLKHNNN) are enriched in basic residues. Ser-384 carries the post-translational modification Phosphoserine. Residues 395–414 (PVEEEEDGEDEIEAEEEEEE) show a composition bias toward acidic residues. Over residues 556–573 (APVQEDKPGDIQFKRNDQ) the composition is skewed to basic and acidic residues. Residues 591 to 601 (EREEGEIEEAE) are compositionally biased toward acidic residues. Residues 606-620 (KKSASKKQRGKRNKK) are compositionally biased toward basic residues. Residues 625–641 (SESACVSLPTSVDSQPM) show a composition bias toward polar residues. The span at 741 to 755 (KKNQKRRDCKLRAQQ) shows a compositional bias: basic residues. Ser-759 is modified (phosphoserine). Residues 788-808 (DSGLDLTRHNKKRELAEEADN) show a composition bias toward basic and acidic residues. Positions 815–828 (EMDDDDDDEDEDLI) are enriched in acidic residues.

This sequence belongs to the PIH1 family. Kintoun subfamily. As to quaternary structure, interacts with Pp1alpha-96A, Pp1-87B, Pp1-13C and flw.

Its subcellular location is the cytoplasm. Functionally, required for cytoplasmic pre-assembly of axonemal dyneins, thereby playing a central role in motility in cilia and flagella. Involved in pre-assembly of dynein arm complexes in the cytoplasm before intraflagellar transport loads them for the ciliary compartment. In Drosophila willistoni (Fruit fly), this protein is Protein kintoun.